Consider the following 173-residue polypeptide: RNA pyrophosphohydrolase (173 aa).

The 144-residue stretch at 6-149 folds into the Nudix hydrolase domain; that stretch reads GFRANVGIII…KRDVYRKVMK (144 aa). The Nudix box signature appears at 38–59; sequence GGVDDGETPEEAMYRELYEEVG.

This sequence belongs to the Nudix hydrolase family. RppH subfamily. It depends on a divalent metal cation as a cofactor.

In terms of biological role, accelerates the degradation of transcripts by removing pyrophosphate from the 5'-end of triphosphorylated RNA, leading to a more labile monophosphorylated state that can stimulate subsequent ribonuclease cleavage. The chain is RNA pyrophosphohydrolase from Shewanella woodyi (strain ATCC 51908 / MS32).